A 209-amino-acid polypeptide reads, in one-letter code: Ribosomal RNA large subunit methyltransferase E (209 aa).

5 residues coordinate S-adenosyl-L-methionine: Gly63, Trp65, Asp83, Asp99, and Asp124. The active-site Proton acceptor is the Lys164.

Belongs to the class I-like SAM-binding methyltransferase superfamily. RNA methyltransferase RlmE family.

It localises to the cytoplasm. The enzyme catalyses uridine(2552) in 23S rRNA + S-adenosyl-L-methionine = 2'-O-methyluridine(2552) in 23S rRNA + S-adenosyl-L-homocysteine + H(+). Specifically methylates the uridine in position 2552 of 23S rRNA at the 2'-O position of the ribose in the fully assembled 50S ribosomal subunit. The protein is Ribosomal RNA large subunit methyltransferase E of Shewanella piezotolerans (strain WP3 / JCM 13877).